We begin with the raw amino-acid sequence, 724 residues long: Disks large homolog 4 (724 aa).

2 S-palmitoyl cysteine lipidation sites follow: C3 and C5. Residues 15–35 form a disordered region; it reads QDEDTPPLEHSPAHLPNQANS. 2 consecutive PDZ domains span residues 65-151 and 160-246; these read EITL…VMRR and EIKL…VAKP. A phosphoserine mark is found at S73 and S142. Position 240 is a phosphotyrosine (Y240). Phosphoserine is present on S295. Residues 313-393 enclose the PDZ 3 domain; it reads RIVIHRGSTG…QTVTIIAQYK (81 aa). 2 positions are modified to phosphoserine: S415 and S418. T420 carries the post-translational modification Phosphothreonine. A phosphoserine mark is found at S422, S425, S449, and S480. One can recognise an SH3 domain in the interval 428-498; sequence KRGFYIRALF…PSKRRVERRE (71 aa). The 176-residue stretch at 534–709 folds into the Guanylate kinase-like domain; the sequence is ARPIIILGPT…IYHKVKRVIE (176 aa). Y580 carries the post-translational modification Phosphotyrosine. Phosphoserine is present on residues S606 and S654. Phosphotyrosine is present on Y715.

The protein belongs to the MAGUK family. As to quaternary structure, interacts through its PDZ domains with ANO2 and NETO1. Interacts through its first two PDZ domains with GRIN2A, GRIN2B, GRIN2C, GRIN2D. Interacts with ASIC3. Interacts with SEMA4C. Interacts with CXADR. Interacts with KCND2. Interacts with SYNGAP1. Interacts with LRRC4 and LRRC4B. Interacts with ERBB4. Interacts with KCNA1, KCNA2, KCNA3 and KCNA4. Interacts through its first PDZ domain with GRIK2, KCNA4 and CRIPT. Interacts through its second PDZ domain with the PDZ domain of NOS1 or the C-terminus of CAPON. Interacts through its third PDZ domain with NLGN1 and CRIPT, and probably with NLGN2 and NLGN3. Interacts through its guanylate kinase-like domain with KIF13B. Interacts through its guanylate kinase-like domain with DLGAP1/GKAP, DLGAP2, DLGAP3, DLGAP4, MAP1A, BEGAIN and SIPA1L1. Isoform 2 interacts through an L27 domain with HGS/HRS and the first L27 domain of CASK. Interacts with ADR1B and ANKS1B. May interact with HTR2A. Interacts with ADAM22. Interacts with KLHL17 and LGI1. Interacts with FRMPD4 (via C-terminus). Interacts with LRFN1, LRFN2 and LRFN4. Interacts (via N-terminal tandem pair of PDZ domains) with GPER1 (via C-terminus tail motif); the interaction is direct and induces the increase of GPER1 protein levels residing at the plasma membrane surface in a estradiol-independent manner. Interacts (via N-terminus tandem pair of PDZ domains) with NOS1 (via N-terminal domain). Interacts with SHANK3. Interacts with KCNJ4. Interacts with GPR85. Interacts with CACNG2 and MPP2 (via the SH3-Guanylate kinase-like sub-module). Interacts with ADGRB1. Found in a complex with PRR7 and GRIN1. Interacts (via PDZ3 domain and to lesser degree via PDZ2 domain) with PRR7. Component of the postsynaptic hippocampal AMPA-type glutamate receptor (AMPAR) complex, at least composed of pore forming AMPAR subunits GRIA1, GRIA2 and GRIA3 and AMPAR auxiliary proteins SHISA6 and SHISA7. Interacts (via its first two PDZ domains) with SHISA6 and SHISA7 (via PDZ-binding motif); the interaction is direct. Interacts with RPH3A and GRIN2A; this ternary complex regulates NMDA receptor composition at postsynaptic membranes. Interacts with ABR and BCR. Interacts with DGKI (via PDZ-binding motif); controls the localization of DGKI to the synapse. Interacts with C9orf72, SMCR8 and RAB39B. Interacts with ZDHHC5. Interacts with PTEN (via PDZ domain-binding motif); the interaction is induced by NMDA and is required for PTEN location at postsynaptic density. Found in a complex with GRIA1, GRIA2, GRIA3, GRIA4, CACNG8 and CNIH2. Interacts with FAM81A; the interaction facilitates condensate formation via liquid-liquid phase separation. Interacts with ADGRL3. Interacts with SORCS3. Post-translationally, palmitoylated. Palmitoylation is required for targeting to postsynaptic density, plasma membrane and synapses. Palmitoylation by ZDHHC2 occurs when the synaptic activity decreases and induces DLG4 synaptic clustering. Palmitoylation by ZDHHC15 regulates trafficking to the postsynaptic density and function in synaptogenesis. Palmitoylation may play a role in glutamate receptor GRIA1 synapse clustering. Depalmitoylated by ABHD17A and ABHD17B and to a lesser extent by ABHD17C, ABHD12, ABHD13, LYPLA1 and LYPLA2. Undergoes rapid synaptic palmitoylation/depalmitoylation cycles during neuronal development which slow down in mature neurons. In terms of processing, ubiquitinated by MDM2 in response to NMDA receptor activation, leading to proteasome-mediated degradation of DLG4 which is required for AMPA receptor endocytosis. In terms of tissue distribution, brain.

It localises to the cell membrane. Its subcellular location is the postsynaptic density. The protein resides in the synapse. The protein localises to the cytoplasm. It is found in the cell projection. It localises to the axon. Its subcellular location is the dendritic spine. The protein resides in the dendrite. The protein localises to the presynapse. Postsynaptic scaffolding protein that plays a critical role in synaptogenesis and synaptic plasticity by providing a platform for the postsynaptic clustering of crucial synaptic proteins. Interacts with the cytoplasmic tail of NMDA receptor subunits and shaker-type potassium channels. Required for synaptic plasticity associated with NMDA receptor signaling. Overexpression or depletion of DLG4 changes the ratio of excitatory to inhibitory synapses in hippocampal neurons. May reduce the amplitude of ASIC3 acid-evoked currents by retaining the channel intracellularly. May regulate the intracellular trafficking of ADR1B. Also regulates AMPA-type glutamate receptor (AMPAR) immobilization at postsynaptic density keeping the channels in an activated state in the presence of glutamate and preventing synaptic depression. Under basal conditions, cooperates with FYN to stabilize palmitoyltransferase ZDHHC5 at the synaptic membrane through FYN-mediated phosphorylation of ZDHHC5 and its subsequent inhibition of association with endocytic proteins. The chain is Disks large homolog 4 from Homo sapiens (Human).